A 605-amino-acid polypeptide reads, in one-letter code: MAESDGVEFFANRAQSSMADNKNSVLRCTFSAPSHSSTLLRGLSALRDQGQLLDVVLAIDNERFEVHKAVLASCSDYFRAMFTGGMKESNQNTIELIGLSARGLKHIIDFAYSSEVTLDLDCIQDVLGAAVFLQMVPVVELCEEFLKSAMSVETCLNIGQMATTFSLSSLKQSVDAYTFRHFLQIAQEDDFLHIPMERLTFFLQSNKLKNCSEIDLFHAAIRWLQHDASRRTVASEVLCHVRFPLMRSSELVDSVQIVDIMVEDVQCRHFLLEAFNYQILPFRQHEMQSPRTSIRSDITSLITFGGTPYTDNDRTVSSKVYFLPDITVRQFKELTEMEMGCSHACVSVLDNFVYVVGGQHLQYRSGEGAVDICFRYDPHLNQWLRIQPMQESRIQFQLNVLDGQLYATGGRNRSGSLSSVECYCPKKNEWTNVDSLKRRIWGHAGATCGDKLYISGGYGVSVEDKKTLHCYDSALDQWDFKCPMNEPRVLHAMISANNRIYALGGRMDHVDRCFDVLAVEYYIPETDQWTTVSPMRAGQSEAGCCLLDKKIYIVGGYNWHLNNVTSIVQVYNTETDEWERDLHFPESFAGIACTPIILPQTTTQR.

In terms of domain architecture, BTB spans leucine 53–leucine 120. A BACK domain is found at cysteine 155–glutamine 256. Kelch repeat units lie at residues serine 300 to asparagine 351, phenylalanine 352 to glycine 403, glutamine 404 to aspartate 450, leucine 452 to asparagine 498, arginine 499 to lysine 549, and isoleucine 551 to leucine 598.

In terms of biological role, may play a role in endo(sarco)plasmic reticulum (ER/SR) mitochondrial signaling. May be part of the ubiquitin-proteasome system (UPS) and affect ubiquitination and degradation of target substrates. This Danio rerio (Zebrafish) protein is Kelch-like protein 26 (klhl26).